We begin with the raw amino-acid sequence, 99 residues long: Nucleoid-associated protein SpyM3_1606 (99 aa).

It belongs to the YbaB/EbfC family. In terms of assembly, homodimer.

It localises to the cytoplasm. The protein resides in the nucleoid. Functionally, binds to DNA and alters its conformation. May be involved in regulation of gene expression, nucleoid organization and DNA protection. The protein is Nucleoid-associated protein SpyM3_1606 of Streptococcus pyogenes serotype M3 (strain ATCC BAA-595 / MGAS315).